We begin with the raw amino-acid sequence, 308 residues long: Ornithine carbamoyltransferase (308 aa).

Carbamoyl phosphate contacts are provided by residues 50 to 53 (STRT), Q77, R101, and 128 to 131 (HPCQ). L-ornithine contacts are provided by residues N160, D224, and 228-229 (SM). Carbamoyl phosphate is bound by residues 264–265 (CL) and R292.

It belongs to the aspartate/ornithine carbamoyltransferase superfamily. OTCase family.

The protein resides in the cytoplasm. It carries out the reaction carbamoyl phosphate + L-ornithine = L-citrulline + phosphate + H(+). It participates in amino-acid biosynthesis; L-arginine biosynthesis; L-arginine from L-ornithine and carbamoyl phosphate: step 1/3. In terms of biological role, reversibly catalyzes the transfer of the carbamoyl group from carbamoyl phosphate (CP) to the N(epsilon) atom of ornithine (ORN) to produce L-citrulline. In Mycobacterium ulcerans (strain Agy99), this protein is Ornithine carbamoyltransferase.